Reading from the N-terminus, the 335-residue chain is Methionine import ATP-binding protein MetN 2 (335 aa).

The region spanning 2-242 (IEFHDVHKTY…PQHPTTRRFV (241 aa)) is the ABC transporter domain. 38 to 45 (GHSGAGKS) is a binding site for ATP.

Belongs to the ABC transporter superfamily. Methionine importer (TC 3.A.1.24) family. As to quaternary structure, the complex is composed of two ATP-binding proteins (MetN), two transmembrane proteins (MetI) and a solute-binding protein (MetQ).

The protein localises to the cell inner membrane. It catalyses the reaction L-methionine(out) + ATP + H2O = L-methionine(in) + ADP + phosphate + H(+). The enzyme catalyses D-methionine(out) + ATP + H2O = D-methionine(in) + ADP + phosphate + H(+). Functionally, part of the ABC transporter complex MetNIQ involved in methionine import. Responsible for energy coupling to the transport system. This Pseudomonas aeruginosa (strain UCBPP-PA14) protein is Methionine import ATP-binding protein MetN 2.